Here is a 432-residue protein sequence, read N- to C-terminus: DNA damage-binding protein 2 (432 aa).

The disordered stretch occupies residues 1–31 (MAPKKCPETQKSPDVAVLLRSKSRRGPQELE). Residues K35 and K77 each carry the N6-acetyllysine modification. 2 required for interaction with DDB1 regions span residues 68–79 (SIVRDLYQHKLG) and 87–98 (QQGLQKSFLHSL). 5 WD repeats span residues 116–151 (SLAW…IFLK), 159–194 (ITGL…LRVY), 203–238 (WFCS…LWNL), 244–287 (KVAH…SLPH), and 290–329 (PVNA…LISH). The DWD box motif lies at 256-274 (WLLATASIDQTVKIWDLRQ). The interval 334–336 (FQH) is photolesion recognition. WD repeat units follow at residues 343-386 (TWHS…MCQL) and 396-420 (SLNE…IWSQ).

Belongs to the WD repeat DDB2/WDR76 family. In terms of assembly, component of the UV-DDB complex which includes DDB1 and DDB2. The UV-DDB complex interacts with monoubiquitinated histone H2A and binds to XPC via the DDB2 subunit. Component of the DCX (DDB1-CUL4-X-box) E3 ubiquitin-protein ligase complex DDB1-CUL4-ROC1 (also known as CUL4-DDB-ROC1 and CUL4-DDB-RBX1), which includes CUL4A or CUL4B, DDB1, DDB2 and RBX1. DDB2 may function as the substrate recognition module within this complex. The DDB1-CUL4-ROC1 complex may associate with the COP9 signalosome, and this inhibits the E3 ubiquitin-protein ligase activity of the complex. A large number of other DCX complexes may also exist in which an alternate substrate targeting subunit replaces DDB2. These targeting subunits are generally known as DCAF (DDB1- and CUL4-associated factor) or CDW (CUL4-DDB1-associated WD40-repeat) proteins. Phosphorylation by ABL1 negatively regulate UV-DDB activity. In terms of processing, ubiquitinated by CUL4A in response to UV irradiation. Ubiquitination appears to both impair DNA-binding and promotes ubiquitin-dependent proteolysis. Degradation of DDB2 at sites of DNA damage may be a prerequisite for their recognition by XPC and subsequent repair. CUL4A-mediated degradation appears to be promoted by ABL1. Post-translationally, ubiquitinated, leading to proteasomal degradation, and deubiquitinated by USP24. Deubiquitinated by USP44; leading to its stabilization on DNA lesions. Acetylated. Deacetylation by SIRT6 in response to UV stress facilitates nucleotide excision repair pathway (the NER pathway) transduction. As to expression, expressed in bone marrow, liver, lung, muscle, pancreas and spleen.

The protein localises to the nucleus. It is found in the chromosome. Its pathway is protein modification; protein ubiquitination. Protein, which is both involved in DNA repair and protein ubiquitination, as part of the UV-DDB complex and DCX (DDB1-CUL4-X-box) complexes, respectively. Core component of the UV-DDB complex (UV-damaged DNA-binding protein complex), a complex that recognizes UV-induced DNA damage and recruit proteins of the nucleotide excision repair pathway (the NER pathway) to initiate DNA repair. The UV-DDB complex preferentially binds to cyclobutane pyrimidine dimers (CPD), 6-4 photoproducts (6-4 PP), apurinic sites and short mismatches. Also functions as the substrate recognition module for the DCX (DDB2-CUL4-X-box) E3 ubiquitin-protein ligase complex DDB2-CUL4-ROC1 (also known as CUL4-DDB-ROC1 and CUL4-DDB-RBX1). The DDB2-CUL4-ROC1 complex may ubiquitinate histone H2A, histone H3 and histone H4 at sites of UV-induced DNA damage. The ubiquitination of histones may facilitate their removal from the nucleosome and promote subsequent DNA repair. The DDB2-CUL4-ROC1 complex also ubiquitinates XPC, which may enhance DNA-binding by XPC and promote NER. The DDB2-CUL4-ROC1 complex also ubiquitinates KAT7/HBO1 in response to DNA damage, leading to its degradation: recognizes KAT7/HBO1 following phosphorylation by ATR. In Mus musculus (Mouse), this protein is DNA damage-binding protein 2 (Ddb2).